The sequence spans 364 residues: uncharacterized protein (364 aa).

Helical transmembrane passes span 41 to 61, 298 to 318, and 329 to 349; these read NIFTHIFLFLLIIVSGLFFGL, VIYILLFLIIDSLILLVITYM, and LLFYIFGLLSFNPIVWASIII.

It localises to the membrane. This is an uncharacterized protein from Mycoplasma capricolum subsp. capricolum (strain California kid / ATCC 27343 / NCTC 10154).